A 524-amino-acid chain; its full sequence is Citrate exporter 1 (524 aa).

The tract at residues 1 to 49 (MSSTTSSSRSDLEKVPVPQVTPRDSDSDKGSLSPEPSTLEAQSSEKPPH) is disordered. Over residues 34 to 45 (PEPSTLEAQSSE) the composition is skewed to polar residues. A helical membrane pass occupies residues 60–80 (MVCIVSLAAIFSPLSSNIYFP). Asn90 is a glycosylation site (N-linked (GlcNAc...) asparagine). The next 5 membrane-spanning stretches (helical) occupy residues 95–115 (LATL…SFWG), 125–145 (PVFI…AESK), 155–175 (ALQA…IGDI), 186–206 (GIFG…GGIF), and 215–235 (IFWF…VLLP). Asn244 carries N-linked (GlcNAc...) asparagine glycosylation. The next 6 helical transmembrane spans lie at 296 to 316 (VFIT…VTSS), 332 to 352 (IGLT…LVGY), 395 to 415 (TWWV…SLRT), 417 to 437 (LAVP…LFTI), 459 to 479 (LMRC…LDAL), and 481 to 501 (PDYT…LLYV).

Belongs to the major facilitator superfamily.

It is found in the cell membrane. The catalysed reaction is citrate(in) = citrate(out). Functionally, transmembrane transporter that exports citrate across the cell membrane. The polypeptide is Citrate exporter 1 (Aspergillus niger (strain ATCC 1015 / CBS 113.46 / FGSC A1144 / LSHB Ac4 / NCTC 3858a / NRRL 328 / USDA 3528.7)).